The chain runs to 355 residues: Iron deficiency-induced protein A (355 aa).

The tat-type signal signal peptide spans 1–34; that stretch reads MEKVGRRVFLGMGAAATAYVTHHLWNQNAESSYA. The Fe cation site is built by His-49, Tyr-50, Tyr-180, Tyr-236, and Tyr-237.

It belongs to the bacterial solute-binding protein 1 family. Post-translationally, predicted to be exported by the Tat system. The position of the signal peptide cleavage has not been experimentally proven.

Its subcellular location is the cellular thylakoid membrane. Plays an important role in protecting the acceptor side of photosystem II (PSII) against oxidative damage, especially under iron-limiting growth conditions. Functionally, may also be part of a periplasmic ABC transporter complex involved in iron import. The sequence is that of Iron deficiency-induced protein A (idiA) from Thermosynechococcus vestitus (strain NIES-2133 / IAM M-273 / BP-1).